The primary structure comprises 485 residues: D-alanine--D-alanyl carrier protein ligase (485 aa).

144-145 provides a ligand contact to ATP; it reads TS. Residue Asp-189 coordinates D-alanine. Residue 284–289 coordinates ATP; sequence NTYGPT. Val-293 contributes to the D-alanine binding site. Asp-365 and Lys-473 together coordinate ATP. Lys-473 contacts D-alanine.

The protein belongs to the ATP-dependent AMP-binding enzyme family. DltA subfamily.

Its subcellular location is the cytoplasm. It catalyses the reaction holo-[D-alanyl-carrier protein] + D-alanine + ATP = D-alanyl-[D-alanyl-carrier protein] + AMP + diphosphate. It participates in cell wall biogenesis; lipoteichoic acid biosynthesis. Functionally, catalyzes the first step in the D-alanylation of lipoteichoic acid (LTA), the activation of D-alanine and its transfer onto the D-alanyl carrier protein (Dcp) DltC. In an ATP-dependent two-step reaction, forms a high energy D-alanyl-AMP intermediate, followed by transfer of the D-alanyl residue as a thiol ester to the phosphopantheinyl prosthetic group of the Dcp. D-alanylation of LTA plays an important role in modulating the properties of the cell wall in Gram-positive bacteria, influencing the net charge of the cell wall. The sequence is that of D-alanine--D-alanyl carrier protein ligase from Staphylococcus aureus (strain Mu3 / ATCC 700698).